The chain runs to 44 residues: uncharacterized protein (44 aa).

This is an uncharacterized protein from Saccharomyces cerevisiae (strain ATCC 204508 / S288c) (Baker's yeast).